Consider the following 252-residue polypeptide: tRNA (guanine-N(1)-)-methyltransferase (252 aa).

S-adenosyl-L-methionine is bound by residues Gly113 and 133–138; that span reads LGDYVL.

The protein belongs to the RNA methyltransferase TrmD family. As to quaternary structure, homodimer.

Its subcellular location is the cytoplasm. The enzyme catalyses guanosine(37) in tRNA + S-adenosyl-L-methionine = N(1)-methylguanosine(37) in tRNA + S-adenosyl-L-homocysteine + H(+). Specifically methylates guanosine-37 in various tRNAs. The protein is tRNA (guanine-N(1)-)-methyltransferase of Stenotrophomonas maltophilia (strain R551-3).